Reading from the N-terminus, the 238-residue chain is Probable transcriptional regulatory protein M6_Spy0297 (238 aa).

The protein belongs to the TACO1 family. YeeN subfamily.

It is found in the cytoplasm. In Streptococcus pyogenes serotype M6 (strain ATCC BAA-946 / MGAS10394), this protein is Probable transcriptional regulatory protein M6_Spy0297.